We begin with the raw amino-acid sequence, 184 residues long: MKKLSILAVLAASPAMAATGPFLSLSNTNFIVTLAFLIFMGILLYAKVPGRVLGMLDKRSVQIRTELEEARALREEARTILASYDRKQKEVQEQAARIVASARDEAQAAAEQAKADLRASIARRLAAAEDQIASAEAGAVRAIREQAVSVAVAAAADLLSRQMTPAAASASIDESIKEVEARFH.

The helical transmembrane segment at L4–S24 threads the bilayer.

This sequence belongs to the ATPase B chain family. As to quaternary structure, F-type ATPases have 2 components, F(1) - the catalytic core - and F(0) - the membrane proton channel. F(1) has five subunits: alpha(3), beta(3), gamma(1), delta(1), epsilon(1). F(0) has three main subunits: a(1), b(2) and c(10-14). The alpha and beta chains form an alternating ring which encloses part of the gamma chain. F(1) is attached to F(0) by a central stalk formed by the gamma and epsilon chains, while a peripheral stalk is formed by the delta and b chains.

Its subcellular location is the cell inner membrane. Functionally, f(1)F(0) ATP synthase produces ATP from ADP in the presence of a proton or sodium gradient. F-type ATPases consist of two structural domains, F(1) containing the extramembraneous catalytic core and F(0) containing the membrane proton channel, linked together by a central stalk and a peripheral stalk. During catalysis, ATP synthesis in the catalytic domain of F(1) is coupled via a rotary mechanism of the central stalk subunits to proton translocation. In terms of biological role, component of the F(0) channel, it forms part of the peripheral stalk, linking F(1) to F(0). In Cereibacter sphaeroides (strain ATCC 17029 / ATH 2.4.9) (Rhodobacter sphaeroides), this protein is ATP synthase subunit b 1.